The following is a 272-amino-acid chain: 3-methyl-2-oxobutanoate hydroxymethyltransferase (272 aa).

2 residues coordinate Mg(2+): D42 and D86. Residues 42 to 43 (DS), D86, and K116 each bind 3-methyl-2-oxobutanoate. E118 is a binding site for Mg(2+). The active-site Proton acceptor is the E185.

Belongs to the PanB family. Homodecamer; pentamer of dimers. The cofactor is Mg(2+).

It is found in the cytoplasm. The catalysed reaction is 3-methyl-2-oxobutanoate + (6R)-5,10-methylene-5,6,7,8-tetrahydrofolate + H2O = 2-dehydropantoate + (6S)-5,6,7,8-tetrahydrofolate. It participates in cofactor biosynthesis; (R)-pantothenate biosynthesis; (R)-pantoate from 3-methyl-2-oxobutanoate: step 1/2. Functionally, catalyzes the reversible reaction in which hydroxymethyl group from 5,10-methylenetetrahydrofolate is transferred onto alpha-ketoisovalerate to form ketopantoate. This chain is 3-methyl-2-oxobutanoate hydroxymethyltransferase, found in Prochlorococcus marinus (strain MIT 9313).